The chain runs to 311 residues: Coproporphyrin III ferrochelatase 1 (311 aa).

Fe-coproporphyrin III contacts are provided by residues tyrosine 12, arginine 29, 45 to 46, serine 53, and tyrosine 124; that span reads RY. Fe(2+) contacts are provided by histidine 182 and glutamate 263.

Belongs to the ferrochelatase family.

The protein resides in the cytoplasm. It catalyses the reaction Fe-coproporphyrin III + 2 H(+) = coproporphyrin III + Fe(2+). It participates in porphyrin-containing compound metabolism; protoheme biosynthesis. In terms of biological role, involved in coproporphyrin-dependent heme b biosynthesis. Catalyzes the insertion of ferrous iron into coproporphyrin III to form Fe-coproporphyrin III. The sequence is that of Coproporphyrin III ferrochelatase 1 from Bacillus anthracis.